Reading from the N-terminus, the 791-residue chain is ABC multidrug transporter mdr2 (791 aa).

A glycan (N-linked (GlcNAc...) asparagine) is linked at Asn-147. 2 helical membrane-spanning segments follow: residues 182–202 (ALAF…PFSI) and 220–240 (LFGL…TLGA). Residues 182-471 (ALAFLFLLVS…LSSFYSELMK (290 aa)) enclose the ABC transmembrane type-1 domain. Asn-303 carries N-linked (GlcNAc...) asparagine glycosylation. The next 2 helical transmembrane spans lie at 307 to 324 (GLRA…MAYV) and 326 to 346 (LKLS…AFFY). Asn-352 and Asn-421 each carry an N-linked (GlcNAc...) asparagine glycan. 2 helical membrane passes run 422–442 (MTIL…AITI) and 445–465 (LTSF…LSSF). One can recognise an ABC transporter domain in the interval 504 to 741 (IRFENVTFSY…PDGAFTKLME (238 aa)). N-linked (GlcNAc...) asparagine glycosylation is present at Asn-508. Residue 539 to 546 (GPSGGGKS) coordinates ATP. N-linked (GlcNAc...) asparagine glycosylation occurs at Asn-692. Over residues 754-769 (ANTPANPVAQETSWDL) the composition is skewed to polar residues. Residues 754 to 791 (ANTPANPVAQETSWDLQSDDGTEISEDTNIPSEPRTID) form a disordered region. Residues 770 to 779 (QSDDGTEISE) are compositionally biased toward acidic residues.

It belongs to the ABC transporter superfamily. ABCB family. Mitochondrial peptide exporter (TC 3.A.1.212) subfamily.

The protein resides in the cell membrane. In terms of biological role, pleiotropic ABC efflux transporter that may be involved in A.fumigatus adaptation to azoles. The polypeptide is ABC multidrug transporter mdr2 (Aspergillus fumigatus (strain ATCC MYA-4609 / CBS 101355 / FGSC A1100 / Af293) (Neosartorya fumigata)).